A 370-amino-acid chain; its full sequence is Integrin-linked kinase-associated serine/threonine phosphatase 2C (370 aa).

Met1 carries the post-translational modification N-acetylmethionine. Residues 1–69 (MDLFGDLPEP…SDEEKNGSEE (69 aa)) are disordered. Ser13 carries the post-translational modification Phosphoserine. The span at 33–45 (SSGDSGSLDTSLS) shows a compositional bias: low complexity. A compositionally biased stretch (basic and acidic residues) spans 46 to 69 (EEVKNEGKGAKRKASDEEKNGSEE). The region spanning 86 to 368 (KGYVAERKGE…DNVTVMVVRI (283 aa)) is the PPM-type phosphatase domain. Residues Asp130 and Gly131 each coordinate Mn(2+). Lys188 carries the post-translational modification N6-acetyllysine. Residues Asp304 and Asp359 each coordinate Mn(2+).

It belongs to the PP2C family. As to quaternary structure, interacts with ILK. Mg(2+) is required as a cofactor. It depends on Mn(2+) as a cofactor.

It is found in the cytoplasm. It catalyses the reaction O-phospho-L-seryl-[protein] + H2O = L-seryl-[protein] + phosphate. The catalysed reaction is O-phospho-L-threonyl-[protein] + H2O = L-threonyl-[protein] + phosphate. In terms of biological role, protein phosphatase that may play a role in regulation of cell cycle progression via dephosphorylation of its substrates whose appropriate phosphorylation states might be crucial for cell proliferation. Selectively associates with integrin linked kinase (ILK), to modulate cell adhesion and growth factor signaling. Inhibits the ILK-GSK3B signaling axis and may play an important role in inhibiting oncogenic transformation. The polypeptide is Integrin-linked kinase-associated serine/threonine phosphatase 2C (ILKAP) (Bos taurus (Bovine)).